The following is an 80-amino-acid chain: UPF0512 protein J (80 aa).

This sequence belongs to the UPF0512 family.

The protein is UPF0512 protein J of Dictyostelium discoideum (Social amoeba).